The primary structure comprises 110 residues: Translation initiation factor 1A 3 (110 aa).

The segment at 1–29 is disordered; sequence MIRKRQSGSNKSVSSGNNQEVTRVRTPRK. The span at 7-18 shows a compositional bias: low complexity; the sequence is SGSNKSVSSGNN. Residues 22–96 form the S1-like domain; the sequence is TRVRTPRKDR…SKADVIWKYT (75 aa).

The protein belongs to the eIF-1A family.

Functionally, seems to be required for maximal rate of protein biosynthesis. Enhances ribosome dissociation into subunits and stabilizes the binding of the initiator Met-tRNA(I) to 40 S ribosomal subunits. This chain is Translation initiation factor 1A 3 (eIF1A3), found in Methanosarcina acetivorans (strain ATCC 35395 / DSM 2834 / JCM 12185 / C2A).